A 198-amino-acid chain; its full sequence is dTTP/UTP pyrophosphatase (198 aa).

The active-site Proton acceptor is D72.

Belongs to the Maf family. YhdE subfamily. It depends on a divalent metal cation as a cofactor.

Its subcellular location is the cytoplasm. It carries out the reaction dTTP + H2O = dTMP + diphosphate + H(+). The catalysed reaction is UTP + H2O = UMP + diphosphate + H(+). Functionally, nucleoside triphosphate pyrophosphatase that hydrolyzes dTTP and UTP. May have a dual role in cell division arrest and in preventing the incorporation of modified nucleotides into cellular nucleic acids. This chain is dTTP/UTP pyrophosphatase, found in Pseudomonas fluorescens (strain Pf0-1).